Consider the following 465-residue polypeptide: MNETKKYLVIKAIAQGKKTKKRACVELNLSERQINRPLLAYQQKGKEAFRHGNRNRKPKHAIPDEIKERILKKYLSYETYKPNVLHFCELLAEEEGIKLSDTTVRKILYKKNILSPKSHRKTKKRVRKQAKLNLNQPLDNPILPTAKDFLEDPKKVHPSRPRKKFAGELIQMDASPHAWFGPETTNLHLAIDDASGNILGAYFDKQETLNAYYHVLEQILANHGIPLQMKTDKRTVFTYQASNSKKMEDDSYTQFGYACHQLGILLETTSIPQAKGRVERLNQTLQSRLPIELERNKIHTLEEANTFLLSYIQTFNEQFGNKTKLSVFEEAPNPSERNLILARLAERVVDSGHHIRFQNRCYIPTEQGKEVYFIRKTKALVLKAFDGDIYLNIADKIYHTKELLDHELYSKNFEQEPEQKKERRKYIPPQTHPWKLTSFKQYLHKNKKDYEEFTSEEIHSPQLQV.

The Integrase catalytic domain occupies 157–340 (HPSRPRKKFA…APNPSERNLI (184 aa)).

Functionally, required for the transposition of the insertion element. The chain is Transposase for insertion sequence IS1202 from Streptococcus pneumoniae.